Reading from the N-terminus, the 429-residue chain is Carbamoyl phosphate synthase arginine-specific small chain (429 aa).

Residues 1-20 (MIRVIQPPLIASKQLFRRYL) constitute a mitochondrion transit peptide. A Glutamine amidotransferase type-1 domain is found at 218–406 (HIAVLDCGAK…FENIEQYRAT (189 aa)). C295 serves as the catalytic Nucleophile. Active-site residues include H379 and E381.

It belongs to the CarA family. In terms of assembly, heterodimer composed of 2 chains; the small (or glutamine) chain promotes the hydrolysis of glutamine to ammonia, which is used by the large (or ammonia) chain to synthesize carbamoyl phosphate.

It localises to the mitochondrion matrix. It catalyses the reaction hydrogencarbonate + L-glutamine + 2 ATP + H2O = carbamoyl phosphate + L-glutamate + 2 ADP + phosphate + 2 H(+). The enzyme catalyses L-glutamine + H2O = L-glutamate + NH4(+). It participates in amino-acid biosynthesis; L-arginine biosynthesis; carbamoyl phosphate from bicarbonate: step 1/1. Functionally, small subunit of the arginine-specific carbamoyl phosphate synthase (CPSase). CPSase catalyzes the formation of carbamoyl phosphate from the ammonia moiety of glutamine, carbonate, and phosphate donated by ATP, the first step of the arginine biosynthetic pathway. The small subunit (glutamine amidotransferase) binds and cleaves glutamine to supply the large subunit with the substrate ammonia. The polypeptide is Carbamoyl phosphate synthase arginine-specific small chain (CPA1) (Debaryomyces hansenii (strain ATCC 36239 / CBS 767 / BCRC 21394 / JCM 1990 / NBRC 0083 / IGC 2968) (Yeast)).